We begin with the raw amino-acid sequence, 258 residues long: MKCFQKLYIFILILIVLMAGCESNKITGDSKETQIKKSFAKTLDVYPTKNLEDFYDKEGYRDGEFKKGDKGKWVIRSEMTTELKNENMVSKGMVIRLNRNSRTCTGEYFVRIVKEDSEGKVYSDERKYPVKMENNKIITLKPIDDEKVKKEIEEFKFFVQYGNFKELENYKDGEVTYNPEAPIYSAQYQLKNSDYNVEQLRKRYNITTKKAPKLLLKGSGNLKGSSVGYKNIEFTFVENKEENIYFTDSINFNPSEDK.

The first 20 residues, 1–20 (MKCFQKLYIFILILIVLMAG), serve as a signal peptide directing secretion. A lipid anchor (N-palmitoyl cysteine) is attached at C21. C21 carries S-diacylglycerol cysteine lipidation.

It belongs to the staphylococcal tandem lipoprotein family.

The protein localises to the cell membrane. This is an uncharacterized protein from Staphylococcus aureus (strain COL).